Consider the following 217-residue polypeptide: Large ribosomal subunit protein uL3 (217 aa).

The segment at 127–162 (GFSRGPMSHGSKNHRAPGSTGAGTTPGRIYPGKRMA) is disordered. A compositionally biased stretch (low complexity) spans 142–153 (APGSTGAGTTPG).

It belongs to the universal ribosomal protein uL3 family. As to quaternary structure, part of the 50S ribosomal subunit. Forms a cluster with proteins L14 and L19.

Its function is as follows. One of the primary rRNA binding proteins, it binds directly near the 3'-end of the 23S rRNA, where it nucleates assembly of the 50S subunit. This is Large ribosomal subunit protein uL3 from Prochlorococcus marinus (strain MIT 9301).